The sequence spans 292 residues: RNA polymerase II transcriptional coactivator SUB1 (292 aa).

Disordered stretches follow at residues 1–31 (MSYYNRYRNKRRSDNGGGNLSNSNNNNGGMP) and 117–292 (LLSD…SEEE). Low complexity predominate over residues 20-31 (LSNSNNNNGGMP). Position 119 is a phosphoserine (serine 119). Composition is skewed to basic and acidic residues over residues 133–166 (NNDKDKNGKDKNSPKKRREDKSKASNESHDLEPR), 179–191 (PHEENIQNAEREA), 204–240 (KQQEERKQKEKEEAEEAKAKAVAEQEKEAKAKEKIAE), and 251–267 (AKKEDIVSNINESKDAN). Phosphoserine is present on residues serine 268, serine 269, and serine 289.

This sequence belongs to the transcriptional coactivator PC4 family.

It is found in the nucleus. Its function is as follows. Plays a role in the release of TFIIB from the transcription complex during transcription initiation. Binds to TFIIB and specifically inhibits the formation of the TBP-TFIIB-promoter complexes. The polypeptide is RNA polymerase II transcriptional coactivator SUB1 (SUB1) (Saccharomyces cerevisiae (strain ATCC 204508 / S288c) (Baker's yeast)).